The chain runs to 209 residues: Outer-membrane lipoprotein carrier protein (209 aa).

The signal sequence occupies residues 1-21; sequence MHRQLRYAVLATALFASTAFA.

Belongs to the LolA family. In terms of assembly, monomer.

The protein resides in the periplasm. Functionally, participates in the translocation of lipoproteins from the inner membrane to the outer membrane. Only forms a complex with a lipoprotein if the residue after the N-terminal Cys is not an aspartate (The Asp acts as a targeting signal to indicate that the lipoprotein should stay in the inner membrane). The sequence is that of Outer-membrane lipoprotein carrier protein from Xanthomonas axonopodis pv. citri (strain 306).